A 354-amino-acid polypeptide reads, in one-letter code: Guanine nucleotide-binding protein G(i) subunit alpha-1 (354 aa).

Gly-2 carries the N-myristoyl glycine lipid modification. Residue Cys-3 is the site of S-palmitoyl cysteine attachment. Positions 32 to 354 (REVKLLLLGA…KNNLKDCGLF (323 aa)) constitute a G-alpha domain. Residues 35 to 48 (KLLLLGAGESGKST) are G1 motif. GTP is bound by residues 43–48 (ESGKST), 150–151 (DS), and 175–178 (LRTR). Residue Ser-47 coordinates Mg(2+). The tract at residues 173–181 (DVLRTRVKT) is G2 motif. Thr-181 provides a ligand contact to Mg(2+). Positions 196–205 (FKMFDVGGQR) are G3 motif. GTP contacts are provided by residues 200–204 (DVGGQ), 269–272 (NKKD), and Ala-326. The segment at 265–272 (ILFLNKKD) is G4 motif. Residues 324–329 (TCATDT) are G5 motif.

This sequence belongs to the G-alpha family. G(i/o/t/z) subfamily. As to quaternary structure, heterotrimeric G proteins are composed of 3 units; alpha, beta and gamma. The alpha chain contains the guanine nucleotide binding site. Part of a spindle orientation complex. Identified in complex with the beta subunit GNB1 and the gamma subunit GNG1. Identified in complex with the beta subunit GNB1 and the gamma subunit GNG2. GTP binding causes dissociation of the heterotrimer, liberating the individual subunits so that they can interact with downstream effector proteins. In terms of processing, myristoylation at Gly-2 is required for membrane anchoring before palmitoylation. Post-translationally, palmitoylation at Cys-3 varies with membrane lipid composition.

The protein localises to the nucleus. It localises to the cytoplasm. The protein resides in the cell membrane. It is found in the cytoskeleton. Its subcellular location is the microtubule organizing center. The protein localises to the centrosome. It localises to the cell cortex. The protein resides in the membrane. The enzyme catalyses GTP + H2O = GDP + phosphate + H(+). Its function is as follows. Guanine nucleotide-binding proteins (G proteins) function as transducers downstream of G protein-coupled receptors (GPCRs) in numerous signaling cascades. The alpha chain contains the guanine nucleotide binding site and alternates between an active, GTP-bound state and an inactive, GDP-bound state. Signaling by an activated GPCR promotes GDP release and GTP binding. The alpha subunit has a low GTPase activity that converts bound GTP to GDP, thereby terminating the signal. Both GDP release and GTP hydrolysis are modulated by numerous regulatory proteins. Signaling is mediated via effector proteins, such as adenylate cyclase. Inhibits adenylate cyclase activity of ADCY1, ADCY5 and ADCY6, leading to decreased intracellular cAMP levels. Required for cortical dynein-dynactin complex recruitment during metaphase. The chain is Guanine nucleotide-binding protein G(i) subunit alpha-1 (GNAI1) from Gallus gallus (Chicken).